The chain runs to 291 residues: Protease HtpX (291 aa).

A run of 2 helical transmembrane segments spans residues 4–24 (IALF…VLNI) and 36–56 (LSGL…ISLM). Histidine 143 contacts Zn(2+). The active site involves glutamate 144. Histidine 147 lines the Zn(2+) pocket. The next 2 helical transmembrane spans lie at 151 to 171 (GDMI…IFLS) and 199 to 219 (FIVS…LTMW). Glutamate 225 is a Zn(2+) binding site.

The protein belongs to the peptidase M48B family. Requires Zn(2+) as cofactor.

Its subcellular location is the cell inner membrane. In Aliivibrio fischeri (strain ATCC 700601 / ES114) (Vibrio fischeri), this protein is Protease HtpX.